Consider the following 568-residue polypeptide: 2-succinyl-5-enolpyruvyl-6-hydroxy-3-cyclohexene-1-carboxylate synthase (568 aa).

Belongs to the TPP enzyme family. MenD subfamily. Homodimer. Requires Mg(2+) as cofactor. Mn(2+) is required as a cofactor. The cofactor is thiamine diphosphate.

The enzyme catalyses isochorismate + 2-oxoglutarate + H(+) = 5-enolpyruvoyl-6-hydroxy-2-succinyl-cyclohex-3-ene-1-carboxylate + CO2. It functions in the pathway quinol/quinone metabolism; 1,4-dihydroxy-2-naphthoate biosynthesis; 1,4-dihydroxy-2-naphthoate from chorismate: step 2/7. The protein operates within cofactor biosynthesis; phylloquinone biosynthesis. In terms of biological role, catalyzes the thiamine diphosphate-dependent decarboxylation of 2-oxoglutarate and the subsequent addition of the resulting succinic semialdehyde-thiamine pyrophosphate anion to isochorismate to yield 2-succinyl-5-enolpyruvyl-6-hydroxy-3-cyclohexene-1-carboxylate (SEPHCHC). The protein is 2-succinyl-5-enolpyruvyl-6-hydroxy-3-cyclohexene-1-carboxylate synthase of Synechococcus sp. (strain CC9902).